Consider the following 32-residue polypeptide: Photosystem II reaction center protein Psb30 (32 aa).

Residues 3-23 form a helical membrane-spanning segment; sequence IVIVQLGSLALITLAGPIIIV.

Belongs to the Psb30/Ycf12 family. PSII is composed of 1 copy each of membrane proteins PsbA, PsbB, PsbC, PsbD, PsbE, PsbF, PsbH, PsbI, PsbJ, PsbK, PsbL, PsbM, PsbT, PsbY, PsbZ, Psb30/Ycf12, peripheral proteins of the oxygen-evolving complex and a large number of cofactors. It forms dimeric complexes.

The protein resides in the plastid. It localises to the chloroplast thylakoid membrane. Its function is as follows. A core subunit of photosystem II (PSII), probably helps stabilize the reaction center. In Euglena viridis (Cercaria viridis), this protein is Photosystem II reaction center protein Psb30.